Reading from the N-terminus, the 174-residue chain is Gamma-crystallin C (174 aa).

2 Beta/gamma crystallin 'Greek key' domains span residues 2 to 40 (GKIT…RVDS) and 41 to 83 (GCWM…RLIP). Cys23 bears the S-methylcysteine mark. The segment at 84-87 (HTGS) is connecting peptide. Beta/gamma crystallin 'Greek key' domains lie at 88 to 128 (HRMR…HVLE) and 129 to 171 (GCWV…RRVV).

It belongs to the beta/gamma-crystallin family.

Functionally, crystallins are the dominant structural components of the vertebrate eye lens. The chain is Gamma-crystallin C (Crygc) from Rattus norvegicus (Rat).